A 282-amino-acid chain; its full sequence is Ribosome biogenesis GTPase A (282 aa).

In terms of domain architecture, CP-type G spans 14–178 (RREVTEKLKL…LLDTPGILWP (165 aa)). GTP is bound by residues 58–61 (NKAD), 86–87 (NS), 130–135 (NVGKST), and G174.

Belongs to the TRAFAC class YlqF/YawG GTPase family. MTG1 subfamily. In terms of assembly, interacts with ctc. Interacts with the immature 50S ribosome subunit. 2 molecules of RbgA bind to one 50S subunit.

It is found in the cytoplasm. Its function is as follows. Essential protein that is required for a late step of 50S ribosomal subunit assembly. Has GTPase activity that is stimulated by interaction with the immature 50S ribosome subunit. Binds to the 23S rRNA. Required for the association of ribosomal proteins RplP and RpmA with the large subunit. This chain is Ribosome biogenesis GTPase A (rbgA), found in Bacillus subtilis (strain 168).